The primary structure comprises 147 residues: Small ribosomal subunit protein bS6 (147 aa).

Residues 107 to 147 (KEGRERKARPARAERRDDTEAEDLSDEEGVEAEDFEEEQGV) form a disordered region. Positions 125-147 (TEAEDLSDEEGVEAEDFEEEQGV) are enriched in acidic residues.

Belongs to the bacterial ribosomal protein bS6 family.

In terms of biological role, binds together with bS18 to 16S ribosomal RNA. The sequence is that of Small ribosomal subunit protein bS6 from Cellvibrio japonicus (strain Ueda107) (Pseudomonas fluorescens subsp. cellulosa).